We begin with the raw amino-acid sequence, 164 residues long: Peptide deformylase (164 aa).

Fe cation contacts are provided by Cys-87 and His-129. The active site involves Glu-130. His-133 provides a ligand contact to Fe cation.

The protein belongs to the polypeptide deformylase family. Fe(2+) serves as cofactor.

The catalysed reaction is N-terminal N-formyl-L-methionyl-[peptide] + H2O = N-terminal L-methionyl-[peptide] + formate. Functionally, removes the formyl group from the N-terminal Met of newly synthesized proteins. Requires at least a dipeptide for an efficient rate of reaction. N-terminal L-methionine is a prerequisite for activity but the enzyme has broad specificity at other positions. The polypeptide is Peptide deformylase (Thermotoga petrophila (strain ATCC BAA-488 / DSM 13995 / JCM 10881 / RKU-1)).